Here is a 538-residue protein sequence, read N- to C-terminus: MKIYLRFVWILIIILNFLLNLFITTNGVIIVNAFKKSLIVAASFASLSLFNSATAELVYKPLEQPVEPAKPDLKIESVNEKFAEKYPNQYNSWRSTANGDGENIIYADEENPRLIVLWGGYAFAKEYNAPRGHFYAVTDVRNILRTGAPKTANDGPQAMACWTCKGPDVPRLIAEWGEKDYFNAKWAKGGPEIVNSIGCADCHDTTSKDFAEGKPALRIARPHVLRALDALEKATAEKDKAEGRPHNNLSFNTAARTEKRAEICANCHVEYYFAGDIKQVTFPWDNGQTVDDIEKYYDDIGFTDWTHSLSKAPMLKAQHPDFEIWSLGMHGKNGVTCVDCHMPKVQGADGKVYTDHQIQNPFEAFDSTCANCHDQSKEKLRDIVTSRKKEVKDVMGRLEDQVVKAHFEAKEAWDAGATKKEMEAALMDIRHAQWRWDYTAASHGGHMHAPEVVLRVLASGLDKVADARTKLAVILTKHGVKTPVQIPDISTADKAWKVMGIDIEKERKAKEEFLKTVVPQWEQQAREKGLLVDPPAQK.

Residues 1 to 55 form the signal peptide; the sequence is MKIYLRFVWILIIILNFLLNLFITTNGVIIVNAFKKSLIVAASFASLSLFNSATA. His-133 is a heme c binding site. Positions 161, 164, and 165 each coordinate heme. Residues Cys-199, Cys-202, His-203, Cys-264, Cys-267, and His-268 each contribute to the heme c site. Glu-270, Tyr-271, Lys-316, and Gln-318 together coordinate Ca(2+). Residue Tyr-271 participates in substrate binding. Residue His-319 participates in substrate binding. Heme c contacts are provided by His-330, Cys-337, Cys-340, His-341, His-356, Cys-369, Cys-372, His-373, and His-448.

The protein belongs to the cytochrome c-552 family. The cofactor is Ca(2+). It depends on heme c as a cofactor.

The protein localises to the periplasm. The catalysed reaction is 6 Fe(III)-[cytochrome c] + NH4(+) + 2 H2O = 6 Fe(II)-[cytochrome c] + nitrite + 8 H(+). It participates in nitrogen metabolism; nitrate reduction (assimilation). In terms of biological role, catalyzes the reduction of nitrite to ammonia, consuming six electrons in the process. This chain is Cytochrome c-552, found in Haemophilus influenzae (strain ATCC 51907 / DSM 11121 / KW20 / Rd).